The following is a 154-amino-acid chain: 6,7-dimethyl-8-ribityllumazine synthase (154 aa).

Residues Phe-23, 57-59, and 81-83 contribute to the 5-amino-6-(D-ribitylamino)uracil site; these read AFE and AVI. A (2S)-2-hydroxy-3-oxobutyl phosphate-binding site is contributed by 86–87; that stretch reads ST. The active-site Proton donor is His-89. A 5-amino-6-(D-ribitylamino)uracil-binding site is contributed by Phe-114. Position 128 (Arg-128) interacts with (2S)-2-hydroxy-3-oxobutyl phosphate.

It belongs to the DMRL synthase family.

The enzyme catalyses (2S)-2-hydroxy-3-oxobutyl phosphate + 5-amino-6-(D-ribitylamino)uracil = 6,7-dimethyl-8-(1-D-ribityl)lumazine + phosphate + 2 H2O + H(+). It functions in the pathway cofactor biosynthesis; riboflavin biosynthesis; riboflavin from 2-hydroxy-3-oxobutyl phosphate and 5-amino-6-(D-ribitylamino)uracil: step 1/2. In terms of biological role, catalyzes the formation of 6,7-dimethyl-8-ribityllumazine by condensation of 5-amino-6-(D-ribitylamino)uracil with 3,4-dihydroxy-2-butanone 4-phosphate. This is the penultimate step in the biosynthesis of riboflavin. This Campylobacter jejuni subsp. doylei (strain ATCC BAA-1458 / RM4099 / 269.97) protein is 6,7-dimethyl-8-ribityllumazine synthase.